Reading from the N-terminus, the 461-residue chain is Tubulin gamma-1 chain (461 aa).

142 to 148 contacts GTP; sequence AGGTGSG.

This sequence belongs to the tubulin family.

It localises to the cytoplasm. It is found in the cytoskeleton. The protein resides in the microtubule organizing center. Its subcellular location is the centrosome. Tubulin is the major constituent of microtubules. The gamma chain is found at microtubule organizing centers (MTOC) such as the spindle poles or the centrosome, suggesting that it is involved in the minus-end nucleation of microtubule assembly. This chain is Tubulin gamma-1 chain, found in Euplotoides octocarinatus (Freshwater ciliate).